A 219-amino-acid chain; its full sequence is ER lumen protein-retaining receptor (219 aa).

Over 1 to 3 the chain is Lumenal; it reads MLN. The chain crosses the membrane as a helical span at residues 4-22; sequence VFRIAGDFSHLASIIILIQ. Topologically, residues 23–36 are cytoplasmic; the sequence is SITTSNSVDGISLK. Residues 37–54 traverse the membrane as a helical segment; that stretch reads TQLLYTLVFITRYLNLFT. Topologically, residues 55–62 are lumenal; the sequence is KWTSLYNF. A helical transmembrane segment spans residues 63 to 82; sequence LMKIVFISSSVYVIVLMRQQ. Topologically, residues 83–102 are cytoplasmic; the sequence is KFKNPVAYQDMITRDQFKIK. Residues 103 to 116 form a helical membrane-spanning segment; sequence FLIVPCILLGLIFN. The Lumenal portion of the chain corresponds to 117–123; that stretch reads YRFSFIQ. Residues 124-143 form a helical membrane-spanning segment; that stretch reads ICWSFSLWLESVAILPQLFM. The Cytoplasmic portion of the chain corresponds to 144 to 155; that stretch reads LTKTGKAKQLTS. Residues 156-174 traverse the membrane as a helical segment; the sequence is HYIFALGLYRALYIPNWIW. Topologically, residues 175 to 184 are lumenal; sequence RYYTEERFDK. Residues 185 to 205 form a helical membrane-spanning segment; it reads LSVFTGVIQTLVYSDFFYIYY. Residues 206–219 are Cytoplasmic-facing; that stretch reads QKVIKLGGDLELPQ.

This sequence belongs to the ERD2 family.

The protein resides in the endoplasmic reticulum membrane. Its function is as follows. Required for the retention of luminal endoplasmic reticulum proteins. Determines the specificity of the luminal ER protein retention system. Also required for normal vesicular traffic through the Golgi. This receptor recognizes H-D-E-L and D-D-E-L, but not K-D-E-L. The protein is ER lumen protein-retaining receptor (ERD2) of Kluyveromyces lactis (strain ATCC 8585 / CBS 2359 / DSM 70799 / NBRC 1267 / NRRL Y-1140 / WM37) (Yeast).